Reading from the N-terminus, the 339-residue chain is DNA-directed RNA polymerase subunit alpha (339 aa).

Positions 1–233 (MVREEITGST…DLFLPFLHTE (233 aa)) are alpha N-terminal domain (alpha-NTD). Residues 264–339 (KKGIPLNCIF…IDLPKNKFSL (76 aa)) are alpha C-terminal domain (alpha-CTD).

This sequence belongs to the RNA polymerase alpha chain family. In terms of assembly, in plastids the minimal PEP RNA polymerase catalytic core is composed of four subunits: alpha, beta, beta', and beta''. When a (nuclear-encoded) sigma factor is associated with the core the holoenzyme is formed, which can initiate transcription.

The protein resides in the plastid. It localises to the chloroplast. It catalyses the reaction RNA(n) + a ribonucleoside 5'-triphosphate = RNA(n+1) + diphosphate. Its function is as follows. DNA-dependent RNA polymerase catalyzes the transcription of DNA into RNA using the four ribonucleoside triphosphates as substrates. The polypeptide is DNA-directed RNA polymerase subunit alpha (Zea mays (Maize)).